Consider the following 491-residue polypeptide: Aspartyl/glutamyl-tRNA(Asn/Gln) amidotransferase subunit B (491 aa).

It belongs to the GatB/GatE family. GatB subfamily. In terms of assembly, heterotrimer of A, B and C subunits.

The enzyme catalyses L-glutamyl-tRNA(Gln) + L-glutamine + ATP + H2O = L-glutaminyl-tRNA(Gln) + L-glutamate + ADP + phosphate + H(+). It carries out the reaction L-aspartyl-tRNA(Asn) + L-glutamine + ATP + H2O = L-asparaginyl-tRNA(Asn) + L-glutamate + ADP + phosphate + 2 H(+). Its function is as follows. Allows the formation of correctly charged Asn-tRNA(Asn) or Gln-tRNA(Gln) through the transamidation of misacylated Asp-tRNA(Asn) or Glu-tRNA(Gln) in organisms which lack either or both of asparaginyl-tRNA or glutaminyl-tRNA synthetases. The reaction takes place in the presence of glutamine and ATP through an activated phospho-Asp-tRNA(Asn) or phospho-Glu-tRNA(Gln). This Burkholderia lata (strain ATCC 17760 / DSM 23089 / LMG 22485 / NCIMB 9086 / R18194 / 383) protein is Aspartyl/glutamyl-tRNA(Asn/Gln) amidotransferase subunit B.